The primary structure comprises 158 residues: Protein-export protein SecB (158 aa).

Belongs to the SecB family. Homotetramer, a dimer of dimers. One homotetramer interacts with 1 SecA dimer.

The protein localises to the cytoplasm. In terms of biological role, one of the proteins required for the normal export of preproteins out of the cell cytoplasm. It is a molecular chaperone that binds to a subset of precursor proteins, maintaining them in a translocation-competent state. It also specifically binds to its receptor SecA. The sequence is that of Protein-export protein SecB from Yersinia pestis (strain Pestoides F).